A 187-amino-acid chain; its full sequence is Elongation factor P (187 aa).

Belongs to the elongation factor P family.

It localises to the cytoplasm. Its pathway is protein biosynthesis; polypeptide chain elongation. Its function is as follows. Involved in peptide bond synthesis. Stimulates efficient translation and peptide-bond synthesis on native or reconstituted 70S ribosomes in vitro. Probably functions indirectly by altering the affinity of the ribosome for aminoacyl-tRNA, thus increasing their reactivity as acceptors for peptidyl transferase. The sequence is that of Elongation factor P from Parasynechococcus marenigrum (strain WH8102).